The sequence spans 32 residues: Ovostatin (32 aa).

Residues C27–Q30 constitute a cross-link (isoglutamyl cysteine thioester (Cys-Gln)).

This sequence belongs to the protease inhibitor I39 (alpha-2-macroglobulin) family. As to quaternary structure, homotetramer, which consists of two pairs of disulfide-linked chains.

The protein localises to the secreted. Functionally, is able to inhibit all four classes of proteinases by a unique 'trapping' mechanism. This protein has a peptide stretch, called the 'bait region' which contains specific cleavage sites for different proteinases. When a proteinase cleaves the bait region, a conformational change is induced in the protein which traps the proteinase. The entrapped enzyme remains active against low molecular weight substrates (activity against high molecular weight substrates is greatly reduced). Following cleavage in the bait region a thioester bond is hydrolyzed and mediates the covalent binding of the protein to the proteinase. This chain is Ovostatin, found in Anas platyrhynchos (Mallard).